A 248-amino-acid polypeptide reads, in one-letter code: Probable transcriptional regulatory protein HCH_04926 (248 aa).

This sequence belongs to the TACO1 family.

It localises to the cytoplasm. This Hahella chejuensis (strain KCTC 2396) protein is Probable transcriptional regulatory protein HCH_04926.